We begin with the raw amino-acid sequence, 178 residues long: Transcription factor E (178 aa).

Residues 5-89 form the HTH TFE/IIEalpha-type domain; sequence AEELILSLAK…YWKVNIDQIN (85 aa).

This sequence belongs to the TFE family. In terms of assembly, monomer. Interaction with RNA polymerase subunits RpoF and RpoE is necessary for Tfe stimulatory transcription activity. Able to interact with Tbp and RNA polymerase in the absence of DNA promoter. Interacts both with the preinitiation and elongation complexes.

In terms of biological role, transcription factor that plays a role in the activation of archaeal genes transcribed by RNA polymerase. Facilitates transcription initiation by enhancing TATA-box recognition by TATA-box-binding protein (Tbp), and transcription factor B (Tfb) and RNA polymerase recruitment. Not absolutely required for transcription in vitro, but particularly important in cases where Tbp or Tfb function is not optimal. It dynamically alters the nucleic acid-binding properties of RNA polymerases by stabilizing the initiation complex and destabilizing elongation complexes. Seems to translocate with the RNA polymerase following initiation and acts by binding to the non template strand of the transcription bubble in elongation complexes. This Sulfurisphaera tokodaii (strain DSM 16993 / JCM 10545 / NBRC 100140 / 7) (Sulfolobus tokodaii) protein is Transcription factor E.